The chain runs to 1946 residues: Integrin beta-like protein E (1946 aa).

A signal peptide spans 1–22 (MNNLFKFLFVLLAIFCPPISDL). Residues 23–1875 (VVSHGVPQQH…ATTQTTNNKT (1853 aa)) are Extracellular-facing. N-linked (GlcNAc...) asparagine glycans are attached at residues Asn107, Asn134, and Asn203. One can recognise an EGF-like domain in the interval 423–460 (YGQNCDPTPPCDKGIPNEGILGDGKCMCINGYSGDKCD). 2 disulfide bridges follow: Cys433-Cys448 and Cys450-Cys459. The 186-residue stretch at 514–699 (DVFVLVDVNV…AGLKSVLSNV (186 aa)) folds into the VWFA domain. N-linked (GlcNAc...) asparagine glycans are attached at residues Asn705, Asn860, Asn1043, Asn1113, Asn1177, Asn1374, Asn1401, Asn1513, Asn1611, Asn1620, Asn1662, Asn1671, Asn1737, Asn1743, Asn1762, Asn1812, Asn1852, and Asn1873. Residues 1876–1896 (VLTGAIAGAAAGTALIAAAAW) form a helical membrane-spanning segment. Over 1897-1946 (KLLRKAAPPTDTFFSEAAFLGDGVNANPLYEQSASAAENPLYQSASDNTD) the chain is Cytoplasmic.

This sequence belongs to the SIB family. As to quaternary structure, interacts with talA/talin.

The protein resides in the membrane. In terms of biological role, implicated in cellular adhesion. The polypeptide is Integrin beta-like protein E (sibE) (Dictyostelium discoideum (Social amoeba)).